The sequence spans 353 residues: MLAIGIIRSMKTDDFDFHLPDELIAQFPLANRSDSRMLYVNGKHADLRDAAFRNLPDYLKRGDVIVLNNTRVVKARLSGVKSTGGKVEVMVERILDTHRARVLIRASHALVIGSTLLLENKITAQVEAREQDIYTLCFMHSLPLIELLDQFGHTPLPPYIGRNATVSDENRYQTVFAQESGAVAAPTAGLHFDETMLQTLRTLGVKIIYVTLHVGAGTFQPVRVQNIDQHVMHTEPYHIPTETVEAIQMCKSAGGSVLAVGTTSLRALESCMLTNDGTLVAGAGETNLFITPGFRFRIVDRLLTNFHLPRSTLLMLVSAFAGMETIRHAYRHAIDNHYRFFSYGDAMLIDSQP.

This sequence belongs to the QueA family. In terms of assembly, monomer.

It is found in the cytoplasm. It catalyses the reaction 7-aminomethyl-7-carbaguanosine(34) in tRNA + S-adenosyl-L-methionine = epoxyqueuosine(34) in tRNA + adenine + L-methionine + 2 H(+). Its pathway is tRNA modification; tRNA-queuosine biosynthesis. Its function is as follows. Transfers and isomerizes the ribose moiety from AdoMet to the 7-aminomethyl group of 7-deazaguanine (preQ1-tRNA) to give epoxyqueuosine (oQ-tRNA). The sequence is that of S-adenosylmethionine:tRNA ribosyltransferase-isomerase from Nitrosomonas europaea (strain ATCC 19718 / CIP 103999 / KCTC 2705 / NBRC 14298).